A 331-amino-acid chain; its full sequence is Olfactory receptor 6K3 (331 aa).

The Extracellular portion of the chain corresponds to 1-41 (MCWTMPSPFTGSSTRNMESGNQSTVTEFIFTGFPQLQDGSL). Asparagine 21 is a glycosylation site (N-linked (GlcNAc...) asparagine). Residues 42–62 (LYFFPLLFIYTFIIIDNLLIF) form a helical membrane-spanning segment. Residues 63-70 (SAVRLDTH) lie on the Cytoplasmic side of the membrane. Residues 71–91 (LHNPMYNFISIFSFLEIWYTT) traverse the membrane as a helical segment. Residues 92-115 (ATIPKMLSNLISEKKAISMTGCIL) lie on the Extracellular side of the membrane. A disulfide bond links cysteine 113 and cysteine 205. A helical transmembrane segment spans residues 116–136 (QMYFFHSLENSEGILLTTMAI). Residues 137–155 (DRYVAICNPLRYQMIMTPR) lie on the Cytoplasmic side of the membrane. A helical transmembrane segment spans residues 156–176 (LCAQLSAGSCLFGFLILLPEI). Residues 177-212 (VMISTLPFCGPNQIHQIFCDLVPVLSLACTDTSMIL) are Extracellular-facing. A helical transmembrane segment spans residues 213 to 232 (IEDVIHAVTIIITFLIIALS). The Cytoplasmic portion of the chain corresponds to 233-252 (YVRIVTVILRIPSSEGRQKA). A helical membrane pass occupies residues 253 to 273 (FSTCAGHLMVFPIFFGSVSLM). At 274–286 (YLRFSDTYPPVLD) the chain is on the extracellular side. Residues 287–307 (TAIALMFTVLAPFFNPIIYSL) form a helical membrane-spanning segment. Topologically, residues 308-331 (RNKDMNNAIKKLFCLQKVLNKPGG) are cytoplasmic.

The protein belongs to the G-protein coupled receptor 1 family.

Its subcellular location is the cell membrane. Its function is as follows. Odorant receptor. The protein is Olfactory receptor 6K3 (OR6K3) of Homo sapiens (Human).